Reading from the N-terminus, the 61-residue chain is Large ribosomal subunit protein uL30 (61 aa).

The segment at 1 to 20 is disordered; it reads MSQKKVTVRQVGSPIGRKPE.

It belongs to the universal ribosomal protein uL30 family. Part of the 50S ribosomal subunit.

The protein is Large ribosomal subunit protein uL30 of Hyphomonas neptunium (strain ATCC 15444).